The primary structure comprises 286 residues: uncharacterized protein (286 aa).

This is an uncharacterized protein from Acidianus convivator (ATV).